We begin with the raw amino-acid sequence, 394 residues long: ATP phosphoribosyltransferase regulatory subunit (394 aa).

It belongs to the class-II aminoacyl-tRNA synthetase family. HisZ subfamily. As to quaternary structure, heteromultimer composed of HisG and HisZ subunits.

Its subcellular location is the cytoplasm. It functions in the pathway amino-acid biosynthesis; L-histidine biosynthesis; L-histidine from 5-phospho-alpha-D-ribose 1-diphosphate: step 1/9. Its function is as follows. Required for the first step of histidine biosynthesis. May allow the feedback regulation of ATP phosphoribosyltransferase activity by histidine. The protein is ATP phosphoribosyltransferase regulatory subunit of Saccharophagus degradans (strain 2-40 / ATCC 43961 / DSM 17024).